Here is a 407-residue protein sequence, read N- to C-terminus: Accessory Sec system protein translocase subunit SecY2 (407 aa).

Helical transmembrane passes span 22–42, 68–88, 108–128, 136–156, 169–189, 191–211, 245–265, 280–300, 343–363, and 366–386; these read IAFT…TIVD, LNVF…ISLI, EKFL…NQFV, FTEL…MWLA, PIVL…IVSI, ILML…LLLT, ISIM…NLIF, FGHY…GYLL, WFGT…SLLV, and LSEY…AMNI.

Belongs to the SecY/SEC61-alpha family. SecY2 subfamily. In terms of assembly, component of the accessory SecA2/SecY2 protein translocase complex required to export cell wall proteins. May form heterotrimers with SecE and SecG subunits.

Its subcellular location is the cell membrane. In terms of biological role, part of the accessory SecA2/SecY2 system specifically required for export of possible cell wall proteins. The central subunit of a protein translocation channel. In Staphylococcus pseudintermedius (strain ED99), this protein is Accessory Sec system protein translocase subunit SecY2.